A 390-amino-acid polypeptide reads, in one-letter code: Neutrophil cytosol factor 1 (390 aa).

Residues Thr-4–Leu-125 enclose the PX domain. 2 SH3 domains span residues Ile-156–Ser-215 and Tyr-226–Glu-285. The interval Gln-291–Val-390 is disordered. Ser-304, Ser-321, Ser-329, and Ser-346 each carry phosphoserine. The segment covering Ile-374–Lys-383 has biased composition (basic and acidic residues).

Component of the phagocyte NADPH oxidase complex composed of an obligatory core heterodimer formed by the membrane proteins CYBA and CYBB and the cytosolic regulatory subunits NCF1/p47-phox, NCF2/p67-phox, NCF4/p40-phox and the small GTPase RAC1 or RAC2. Part of a cytosolic complex composed at least by NCF1, NCF2 and NCF4. Interacts (via C-terminus) with NCF2 (via the C-terminal SH3 domain). Interacts with NCF4. Interacts with CYBB. Interacts (via the second SH3 domain) with CYBA; interaction is phosphorylation-dependent. Interacts with NOXA1. Interacts with ADAM15. Interacts with TRAF4. Interacts with FASLG. Interacts with PARK7 (via C-terminus); the interaction is enhanced by LPS and modulates NCF1 phosphorylation and membrane translocation. In terms of processing, phosphorylated by PRKCD; phosphorylation induces activation of NCF1, leading to assembly and activation of the NADPH oxidase complex.

It is found in the cytoplasm. The protein resides in the cytosol. Its subcellular location is the membrane. Subunit of the phagocyte NADPH oxidase complex that mediates the transfer of electrons from cytosolic NADPH to O2 to produce the superoxide anion (O2(-)). In the activated complex, electrons are first transferred from NADPH to flavin adenine dinucleotide (FAD) and subsequently transferred via two heme molecules to molecular oxygen, producing superoxide through an outer-sphere reaction. Activation of the NADPH oxidase complex is initiated by the assembly of cytosolic subunits of the NADPH oxidase complex with the core NADPH oxidase complex to form a complex at the plasma membrane or phagosomal membrane. This activation process is initiated by phosphorylation dependent binding of the cytosolic NCF1/p47-phox subunit to the C-terminus of CYBA/p22-phox. The protein is Neutrophil cytosol factor 1 of Mus musculus (Mouse).